A 1133-amino-acid chain; its full sequence is Lon protease homolog, mitochondrial (1133 aa).

Residues 1–37 (MLRTRTTKTLSTVARTTRAIQYYRSIAKTAAVSQRRF) constitute a mitochondrion transit peptide. A propeptide spans 38-98 (ASTLTVRDVE…ATNSGKSILA (61 aa)) (removed in mature form; by autocatalysis). 2 stretches are compositionally biased toward basic and acidic residues: residues 98-117 (AKDD…VPDE) and 125-143 (EPTR…EASK). Disordered stretches follow at residues 98–176 (AKDD…KDVP) and 282–358 (ELFP…LDDI). Low complexity predominate over residues 145-166 (SRSSASGGGQSSSSRSDSGDGS). In terms of domain architecture, Lon N-terminal spans 182 to 480 (MLALPIARRP…KSLLVLKKEL (299 aa)). Composition is skewed to basic and acidic residues over residues 282-301 (ELFP…KDTD) and 325-340 (KLED…SELQ). Residues 348 to 358 (TEEESEELDDI) are compositionally biased toward acidic residues. ATP is bound at residue 632 to 639 (GPPGVGKT). The dispensable for catalytic activity stretch occupies residues 839 to 892 (KKLSIEDSPTSSADSKPKESVSSEEKAENNAKSSSEKTKDNNSEKTSDDIEALK). Positions 844 to 889 (EDSPTSSADSKPKESVSSEEKAENNAKSSSEKTKDNNSEKTSDDIE) are disordered. Residues 853–889 (SKPKESVSSEEKAENNAKSSSEKTKDNNSEKTSDDIE) show a composition bias toward basic and acidic residues. The Lon proteolytic domain occupies 923–1109 (TTPPGVVMGL…NDIFQKLFKD (187 aa)). Catalysis depends on residues Ser-1015 and Lys-1058.

Belongs to the peptidase S16 family. Homohexamer. Organized in a ring with a central cavity. The ATP-binding and proteolytic domains (AP-domain) form a hexameric chamber. Oligomerization is independent of its proteolytic activity and the autocatalytic maturation of its subunits.

Its subcellular location is the mitochondrion matrix. The catalysed reaction is Hydrolysis of proteins in presence of ATP.. In terms of biological role, ATP-dependent serine protease that mediates the selective degradation of misfolded, unassembled or oxidatively damaged polypeptides as well as certain short-lived regulatory proteins in the mitochondrial matrix. May also have a chaperone function in the assembly of inner membrane protein complexes. Participates in the regulation of mitochondrial gene expression and in the maintenance of the integrity of the mitochondrial genome. Binds to mitochondrial DNA in a site-specific manner. Endogenous substrates include ABF2, ACO2, ILV1, ILV2, LSC1, LYS4, MGM101 and several oxidized proteins. The 2 nucleic acid-binding proteins ABF2 and MGM101 are protected from degradation by PIM1 when they are bound to DNA. This is Lon protease homolog, mitochondrial from Saccharomyces cerevisiae (strain ATCC 204508 / S288c) (Baker's yeast).